Here is a 447-residue protein sequence, read N- to C-terminus: MSTGPIPPASEEGSFVSAPSFRSKQRKILHLLLERNTSFTIRSDFPESPKDKLHDSANLSILSGGTPKCCLDLSNLSSGEMSASPLTTSADLEDNGSLDSSGPLDRQLTGKDFHQDLMKGIPVQLLCSTPNAMNHGHRKKIAKRSTSAHKENINTSLKALEWEAPRTPRFRKMPGGPLTSPLCELEMKHLGSPITTVPKLSQNVKLEDQERISEDPMECSLGDQDAKGLSLRKMVPLCDMNAIQMEEEESGSELLIGDFSKVCVLPTVPGKHPDLKYISPDTVAALLSGKFQSVIERFYIIDCRYPYEYLGGHILGALNLHSQKELHEFFLRKPVVPLDIQKRVIIVFLCEFSSERGPRMCRSLREKDRALNQYPALYYPELYILKGGYRDFFPEYMELCDPQSYCPMLHQDHQAELLSWRSQSKAQEGERQLQGQIALLVKGASPQ.

At Ser-2 the chain carries N-acetylserine. Ser-20, Ser-38, Ser-56, Ser-60, and Ser-63 each carry phosphoserine. The residue at position 66 (Thr-66) is a Phosphothreonine; by CDK1. The span at 81–90 (MSASPLTTSA) shows a compositional bias: polar residues. The segment at 81–109 (MSASPLTTSADLEDNGSLDSSGPLDRQLT) is disordered. Ser-128 carries the post-translational modification Phosphoserine. Phosphothreonine is present on Thr-129. Phosphoserine; by CDK1 is present on Ser-192. A phosphoserine; by PLK3 mark is found at Ser-213 and Ser-220. The 108-residue stretch at 294 to 401 (VIERFYIIDC…FFPEYMELCD (108 aa)) folds into the Rhodanese domain. Cys-350 is a catalytic residue. At Ser-445 the chain carries Phosphoserine.

It belongs to the MPI phosphatase family. As to quaternary structure, interacts with MAPK14 and 14-3-3 proteins. When phosphorylated on Ser-128 and/or Thr-129, interacts with PLK1. Interacts with MARK3/C-TAK1. Phosphorylated by PLK4. Phosphorylated by PLK1, leading to activate the phosphatase activity. Phosphorylated by CHEK1 and MAPKAPK2. This phosphorylation creates a binding site for 14-3-3 protein and inhibits the phosphatase activity. Phosphorylation by PLK3 at Ser-213 promotes nuclear translocation. Ser-220 is a minor phosphorylation site. Phosphorylation by CDK1 occurs at G2 and G2-M transition and leads to increased activity. Spleen and thymus.

It localises to the nucleus. It catalyses the reaction O-phospho-L-tyrosyl-[protein] + H2O = L-tyrosyl-[protein] + phosphate. Its function is as follows. Functions as a dosage-dependent inducer in mitotic control. Tyrosine protein phosphatase required for progression of the cell cycle. When phosphorylated, highly effective in activating G2 cells into prophase. Directly dephosphorylates CDK1 and activates its kinase activity. The sequence is that of M-phase inducer phosphatase 3 (Cdc25c) from Mus musculus (Mouse).